Consider the following 148-residue polypeptide: MSKLSRHAAIRDAITSHPVQNQDELRRLLFKRGHRVTQATLSRDIHELGLVKTGEGYQFPSSEDDSNAAWLPSVERLIREFVYDVKIAQNTVVVKTSAGSAQPVAAALDAEGWPEVVGTVGGDDTIFVVTPSNKDAEKLQSRIKELIA.

This sequence belongs to the ArgR family.

Its subcellular location is the cytoplasm. Its pathway is amino-acid biosynthesis; L-arginine biosynthesis [regulation]. Functionally, regulates arginine biosynthesis genes. In Koribacter versatilis (strain Ellin345), this protein is Arginine repressor.